The following is a 172-amino-acid chain: Large ribosomal subunit protein uL10 (172 aa).

The protein belongs to the universal ribosomal protein uL10 family. In terms of assembly, part of the ribosomal stalk of the 50S ribosomal subunit. The N-terminus interacts with L11 and the large rRNA to form the base of the stalk. The C-terminus forms an elongated spine to which L12 dimers bind in a sequential fashion forming a multimeric L10(L12)X complex.

Forms part of the ribosomal stalk, playing a central role in the interaction of the ribosome with GTP-bound translation factors. The protein is Large ribosomal subunit protein uL10 of Acidothermus cellulolyticus (strain ATCC 43068 / DSM 8971 / 11B).